A 479-amino-acid polypeptide reads, in one-letter code: MNYPAVAKELLTLLGGKSNITALAHCATRLRLAVADEQKIDEQAIDNLEGVKGQFKVAGQYQIIFGSGIVNQVYAEMAKLTGMSEMSTNDVASAGAEKQNIVQPAVKGLSDIFVPIIPAIVAGGLLMGIYNLLTAQGLFIDGKSLIEANPGLTDLANMINTFANAPFVYLPILLAFSASKKFGGNPYLGAALGMLMVHPDLLNGWGFGGASVSGNIPVWNILGFEIQKVGYQGSVLPVLVSAFILAKVELGLRKVIPSVLDNLLTPLLAIFIAGLLTFTVVGPFTRDIGFLLGDGLNWLYNTAGFVGGAVFGLIYAPFVITGMHHSFIAIETQLLADIATTGGTFIFPIAAMSNVSQGAAALAVGVMSKDKKMKGIAIPSGVTGLLGITEPAMFGVNLKLRYPFIAAVCAAALSSAFITMFNVKAQALGAAGLPGIISITPDKIGYYIAGMVIAFLTAFVLTIVLGIGDRAKVGKKAAA.

The 84-residue stretch at 4-87 folds into the PTS EIIB type-1 domain; that stretch reads PAVAKELLTL…AKLTGMSEMS (84 aa). The active-site Phosphocysteine intermediate; for EIIB activity is Cys-26. The next 11 membrane-spanning stretches (helical) occupy residues 112–132, 158–178, 182–202, 204–224, 232–252, 264–284, 303–323, 345–365, 376–396, 403–423, and 448–468; these read IFVPIIPAIVAGGLLMGIYNL, MINTFANAPFVYLPILLAFSA, FGGNPYLGAALGMLMVHPDLL, GWGFGGASVSGNIPVWNILGF, QGSVLPVLVSAFILAKVELGL, LTPLLAIFIAGLLTFTVVGPF, AGFVGGAVFGLIYAPFVITGM, FIFPIAAMSNVSQGAAALAVG, IAIPSGVTGLLGITEPAMFGV, PFIAAVCAAALSSAFITMFNV, and IAGMVIAFLTAFVLTIVLGIG. A PTS EIIC type-1 domain is found at 120–477; that stretch reads IVAGGLLMGI…GDRAKVGKKA (358 aa).

The protein resides in the cell inner membrane. The catalysed reaction is N(pros)-phospho-L-histidyl-[protein](out) + sucrose = sucrose 6(G)-phosphate(in) + L-histidyl-[protein]. In terms of biological role, the phosphoenolpyruvate-dependent sugar phosphotransferase system (sugar PTS), a major carbohydrate active transport system, catalyzes the phosphorylation of incoming sugar substrates concomitantly with their translocation across the cell membrane. This system is involved in sucrose transport. The polypeptide is PTS system sucrose-specific EIIBC component (Vibrio alginolyticus).